The chain runs to 249 residues: Triosephosphate isomerase (249 aa).

A substrate-binding site is contributed by 9 to 11 (NWK). His-94 functions as the Electrophile in the catalytic mechanism. Catalysis depends on Glu-166, which acts as the Proton acceptor. Substrate is bound by residues Gly-172 and 232–233 (GG).

This sequence belongs to the triosephosphate isomerase family. In terms of assembly, homodimer.

Its subcellular location is the cytoplasm. It catalyses the reaction D-glyceraldehyde 3-phosphate = dihydroxyacetone phosphate. Its pathway is carbohydrate biosynthesis; gluconeogenesis. The protein operates within carbohydrate degradation; glycolysis; D-glyceraldehyde 3-phosphate from glycerone phosphate: step 1/1. Its function is as follows. Involved in the gluconeogenesis. Catalyzes stereospecifically the conversion of dihydroxyacetone phosphate (DHAP) to D-glyceraldehyde-3-phosphate (G3P). The protein is Triosephosphate isomerase of Xylella fastidiosa (strain M23).